The following is an 872-amino-acid chain: Tetratricopeptide repeat protein 16 (872 aa).

The segment at 1-20 (MTDSDEDALKVDQGPSQDIP) is disordered. TPR repeat units lie at residues 61 to 94 (VREY…DPQL), 96 to 128 (DFYA…QQDN), 136 to 169 (TFVL…QPEK), 251 to 284 (AQQA…NPLD), 285 to 318 (PSFF…VTED), 331 to 364 (LLTY…EQQE), 365 to 398 (KGLY…SPQD), and 406 to 439 (GLLQ…NPQK). Disordered stretches follow at residues 557-640 (ATPE…ETET) and 653-872 (TAMT…YEVL). A compositionally biased stretch (acidic residues) spans 577–590 (KEEEEKEEEEQKEE). Over residues 591-604 (EEQKKEEKKEEKKP) the composition is skewed to basic and acidic residues. Composition is skewed to polar residues over residues 610 to 640 (KVAS…ETET), 653 to 675 (TAMT…NNRE), 689 to 709 (GQRQ…NFSK), and 721 to 754 (KTKA…SQGP). The span at 762 to 783 (KTTRSPRQRPRKVKAARGRSWR) shows a compositional bias: basic residues. 2 stretches are compositionally biased toward polar residues: residues 799 to 827 (RSST…GQRT) and 839 to 861 (GMSS…SKTE).

This Macaca fascicularis (Crab-eating macaque) protein is Tetratricopeptide repeat protein 16 (TTC16).